A 183-amino-acid chain; its full sequence is MTYLSQIEALLFVAGEEGLSLRHLASMLSLTPTALQQQLEKLSQKYEKDQHSSLCLIETANTYRLVTKEGFAGLLRAYAKTPMNQSLSRASLEVLSIVAYKQPITRIEIDDIRGVNSSGALSKLLAFDLIREAGKKDVVGRPHLYATTDYFLDYMGINHLDELIEVSAVEPADEEIALFRTQD.

It belongs to the ScpB family. In terms of assembly, homodimer. Homodimerization may be required to stabilize the binding of ScpA to the Smc head domains. Component of a cohesin-like complex composed of ScpA, ScpB and the Smc homodimer, in which ScpA and ScpB bind to the head domain of Smc. The presence of the three proteins is required for the association of the complex with DNA.

The protein localises to the cytoplasm. Functionally, participates in chromosomal partition during cell division. May act via the formation of a condensin-like complex containing Smc and ScpA that pull DNA away from mid-cell into both cell halves. The chain is Segregation and condensation protein B from Streptococcus pyogenes serotype M12 (strain MGAS2096).